A 72-amino-acid chain; its full sequence is Translation initiation factor IF-1 2 (72 aa).

One can recognise an S1-like domain in the interval 1–72 (MAKDDVIQMQ…SRARIVFRTK (72 aa)).

It belongs to the IF-1 family. Component of the 30S ribosomal translation pre-initiation complex which assembles on the 30S ribosome in the order IF-2 and IF-3, IF-1 and N-formylmethionyl-tRNA(fMet); mRNA recruitment can occur at any time during PIC assembly.

It is found in the cytoplasm. Functionally, one of the essential components for the initiation of protein synthesis. Stabilizes the binding of IF-2 and IF-3 on the 30S subunit to which N-formylmethionyl-tRNA(fMet) subsequently binds. Helps modulate mRNA selection, yielding the 30S pre-initiation complex (PIC). Upon addition of the 50S ribosomal subunit IF-1, IF-2 and IF-3 are released leaving the mature 70S translation initiation complex. The sequence is that of Translation initiation factor IF-1 2 from Cupriavidus metallidurans (strain ATCC 43123 / DSM 2839 / NBRC 102507 / CH34) (Ralstonia metallidurans).